A 1039-amino-acid chain; its full sequence is Antigen 43 (1039 aa).

The signal sequence occupies residues 1-52 (MKRHLNTCYRLVWNHMTGAFVVASELARARGKRGGVAVALSLAAVTSLPVLA). The Autotransporter domain occupies 737 to 1039 (VNGENNSVRL…NGQATLNVTF (303 aa)).

Interaction with TamA of the translocation and assembly module (TAM) initiates insertion in the outer membrane.

The protein localises to the periplasm. Its subcellular location is the secreted. It is found in the cell surface. It localises to the cell outer membrane. In terms of biological role, controls colony form variation and autoaggregation. May function as an adhesin. The protein is Antigen 43 (flu) of Escherichia coli (strain K12).